The primary structure comprises 157 residues: Large ribosomal subunit protein uL10 (157 aa).

Belongs to the universal ribosomal protein uL10 family. Part of the ribosomal stalk of the 50S ribosomal subunit. The N-terminus interacts with L11 and the large rRNA to form the base of the stalk. The C-terminus forms an elongated spine to which L12 dimers bind in a sequential fashion forming a multimeric L10(L12)X complex.

Functionally, forms part of the ribosomal stalk, playing a central role in the interaction of the ribosome with GTP-bound translation factors. The chain is Large ribosomal subunit protein uL10 from Campylobacter hominis (strain ATCC BAA-381 / DSM 21671 / CCUG 45161 / LMG 19568 / NCTC 13146 / CH001A).